The primary structure comprises 123 residues: Small ribosomal subunit protein uS12 (123 aa).

D90 carries the post-translational modification 3-methylthioaspartic acid.

This sequence belongs to the universal ribosomal protein uS12 family. As to quaternary structure, part of the 30S ribosomal subunit. Contacts proteins S8 and S17. May interact with IF1 in the 30S initiation complex.

In terms of biological role, with S4 and S5 plays an important role in translational accuracy. Interacts with and stabilizes bases of the 16S rRNA that are involved in tRNA selection in the A site and with the mRNA backbone. Located at the interface of the 30S and 50S subunits, it traverses the body of the 30S subunit contacting proteins on the other side and probably holding the rRNA structure together. The combined cluster of proteins S8, S12 and S17 appears to hold together the shoulder and platform of the 30S subunit. This Ehrlichia ruminantium (strain Gardel) protein is Small ribosomal subunit protein uS12.